Here is a 273-residue protein sequence, read N- to C-terminus: Dermonecrotic toxin LspaSicTox-alphaIA1ii (273 aa).

Residue H5 is part of the active site. Mg(2+) contacts are provided by E25 and D27. H41 acts as the Nucleophile in catalysis. Cystine bridges form between C45-C51 and C47-C190. D85 lines the Mg(2+) pocket.

This sequence belongs to the arthropod phospholipase D family. Class II subfamily. Requires Mg(2+) as cofactor. Expressed by the venom gland.

Its subcellular location is the secreted. The enzyme catalyses an N-(acyl)-sphingosylphosphocholine = an N-(acyl)-sphingosyl-1,3-cyclic phosphate + choline. The catalysed reaction is an N-(acyl)-sphingosylphosphoethanolamine = an N-(acyl)-sphingosyl-1,3-cyclic phosphate + ethanolamine. It catalyses the reaction a 1-acyl-sn-glycero-3-phosphocholine = a 1-acyl-sn-glycero-2,3-cyclic phosphate + choline. It carries out the reaction a 1-acyl-sn-glycero-3-phosphoethanolamine = a 1-acyl-sn-glycero-2,3-cyclic phosphate + ethanolamine. Dermonecrotic toxins cleave the phosphodiester linkage between the phosphate and headgroup of certain phospholipids (sphingolipid and lysolipid substrates), forming an alcohol (often choline) and a cyclic phosphate. This toxin acts on sphingomyelin (SM). It may also act on ceramide phosphoethanolamine (CPE), lysophosphatidylcholine (LPC) and lysophosphatidylethanolamine (LPE), but not on lysophosphatidylserine (LPS), and lysophosphatidylglycerol (LPG). It acts by transphosphatidylation, releasing exclusively cyclic phosphate products as second products. Induces dermonecrosis, hemolysis, increased vascular permeability, edema, inflammatory response, and platelet aggregation. This is Dermonecrotic toxin LspaSicTox-alphaIA1ii from Loxosceles spadicea (Recluse spider).